Here is a 907-residue protein sequence, read N- to C-terminus: Catenin alpha-1 (907 aa).

At Thr-2 the chain carries N-acetylthreonine. The interval 2 to 228 (TAVHAGNINF…PILYTASQAC (227 aa)) is involved in homodimerization. Lys-57 is covalently cross-linked (Glycyl lysine isopeptide (Lys-Gly) (interchain with G-Cter in SUMO2)). The tract at residues 97-148 (VRKQGDLMKSAAGEFADDPCSSVKRGNMVRAARALLSAVTRLLILADMADVY) is interaction with JUP and CTNNB1. Residues Ser-264, Ser-268, Ser-296, and Ser-298 each carry the phosphoserine modification. The interval 326–395 (TRDDRRERIV…AVMDHVSDSF (70 aa)) is interaction with alpha-actinin. Thr-635 bears the Phosphothreonine mark. Position 642 is a phosphoserine (Ser-642). Thr-646 carries the post-translational modification Phosphothreonine. A phosphoserine mark is found at Ser-653 and Ser-656. Thr-659 is subject to Phosphothreonine. A Glycyl lysine isopeptide (Lys-Gly) (interchain with G-Cter in SUMO2) cross-link involves residue Lys-798. Ser-852 carries the post-translational modification Phosphoserine. Basic and acidic residues predominate over residues 865 to 881 (PEKKPLVKREKQDETQT). The disordered stretch occupies residues 865–895 (PEKKPLVKREKQDETQTKIKRASQKKHVNPV). The span at 882–892 (KIKRASQKKHV) shows a compositional bias: basic residues.

This sequence belongs to the vinculin/alpha-catenin family. In terms of assembly, monomer and homodimer; the monomer preferentially binds to CTNNB1 and the homodimer to actin. Component of an cadherin:catenin adhesion complex composed of at least of CDH26, beta-catenin/CTNNB1, alpha-catenin/CTNNA1 and p120 catenin/CTNND1. Possible component of an E-cadherin/ catenin adhesion complex together with E-cadherin/CDH1 and beta-catenin/CTNNB1 or gamma-catenin/JUP; the complex is located to adherens junctions. The stable association of CTNNA1 is controversial as CTNNA1 was shown not to bind to F-actin when assembled in the complex. Alternatively, the CTNNA1-containing complex may be linked to F-actin by other proteins such as LIMA1. Binds AFDN and F-actin. Interacts with ARHGAP21. Interacts with AJUBA. Interacts with LIMA1. Interacts with vinculin/VCL. Interacts with TJP2/ZO2 (via N-terminus). Interacts with TJP1/ZO1 (via N-terminus). Post-translationally, sumoylated. In terms of processing, phosphorylation seems to contribute to the strength of cell-cell adhesion rather than to the basic capacity for cell-cell adhesion.

The protein localises to the cytoplasm. Its subcellular location is the cytoskeleton. The protein resides in the cell junction. It is found in the adherens junction. It localises to the cell membrane. The protein localises to the nucleus. Associates with the cytoplasmic domain of a variety of cadherins. The association of catenins to cadherins produces a complex which is linked to the actin filament network, and which seems to be of primary importance for cadherins cell-adhesion properties. Can associate with both E- and N-cadherins. Originally believed to be a stable component of E-cadherin/catenin adhesion complexes and to mediate the linkage of cadherins to the actin cytoskeleton at adherens junctions. In contrast, cortical actin was found to be much more dynamic than E-cadherin/catenin complexes and CTNNA1 was shown not to bind to F-actin when assembled in the complex suggesting a different linkage between actin and adherens junctions components. The homodimeric form may regulate actin filament assembly and inhibit actin branching by competing with the Arp2/3 complex for binding to actin filaments. Involved in the regulation of WWTR1/TAZ, YAP1 and TGFB1-dependent SMAD2 and SMAD3 nuclear accumulation. May play a crucial role in cell differentiation. The chain is Catenin alpha-1 from Oryctolagus cuniculus (Rabbit).